The chain runs to 1070 residues: Alpha-glucosidase (1070 aa).

The first 35 residues, 1–35 (MRSIKAASLTPLLAALFTTLSSTLALPSSVWEHQL), serve as a signal peptide directing secretion. N-linked (GlcNAc...) asparagine glycans are attached at residues asparagine 48, asparagine 99, asparagine 144, asparagine 161, asparagine 208, asparagine 384, asparagine 458, asparagine 480, and asparagine 513. The Nucleophile role is filled by aspartate 526. The active site involves glutamate 529. N-linked (GlcNAc...) asparagine glycosylation is found at asparagine 544, asparagine 566, asparagine 574, asparagine 578, and asparagine 635. The active-site Proton donor is the aspartate 730. Asparagine 818, asparagine 885, asparagine 916, asparagine 983, asparagine 992, asparagine 996, asparagine 1008, asparagine 1029, asparagine 1043, and asparagine 1052 each carry an N-linked (GlcNAc...) asparagine glycan.

This sequence belongs to the glycosyl hydrolase 31 family.

The enzyme catalyses Hydrolysis of terminal, non-reducing (1-&gt;4)-linked alpha-D-glucose residues with release of alpha-D-glucose.. Functionally, hydrolyzes a broad range of alpha-D-linked glucopyranosides, including maltose (alpha-1,4), sucrose (alpha-1,2), isomaltose (alpha-1,6) and turanose (alpha-1,3). This chain is Alpha-glucosidase, found in Candida tsukubaensis (Yeast).